Consider the following 1036-residue polypeptide: MDNEDKISISAKEEKILSFWKEQDIFQKTLDNREGCPTFSFYDGPPFATGLPHYGHLLAGTIKDVVCRYASMDGHYVPRRFGWDCHGVPVEYEVEKSLGLTEPGAIERFGVANFNEECRKIVFRYADEWKYFVDRIGRWVDFSATWRTMDLSFMESVWWVFRSLYDQGLVYEGTKVVPFSTKLGTPLSNFEAGQNYKEVDDPSVVVKFALQDNQGFLLAWTTTPWTLVSNMALAVHPELTYVRIKDKESGDEYILGQESLPRWFPDRESYEWIGQLSGKSLVGQSYEPLFPYFQDKKELEAFRILPADFIEESEGTGIVHMAPAFGEADFFACQEHNVPLVCPVDNQGCYTAEVKDFVGEYIKSADKGIARRLKNENKLFYQGTVRHRYPFCWRTDSPLIYKAVNSWFVAVEKVKSKMLKANESIHWTPEHIKQGRFGKWLEGARDWAISRNRYWGTPIPIWRSDDGELLVIGSIQELEALSGQKIVDLHRHFIDEIEINQNGKSFRRIPYVFDCWFDSGAMPYAQNHYPFERAEETEACFPADFIAEGLDQTRGWFYTLTVIAAALFDQPAFKNVIVNGIILAEDGNKMSKRLNNYPSPKMIMDAYGADALRLYLLNSVVVKAEDLRFSDKGVESVLKQVLLPLSNALAFYKTYAELYGFDPKETDNIELAEIDRWILSSLYSLVGKTRESMSQYDLHAAVNPFVDFIEDLTNWYIRRSRRRFWDAEDSADRRAAFSTLYEVLVVFSKVIAPFIPFIAEDMYQQLRGETDPESVHLCDFPHVVLEKILPDLERKMQDIREIVALGHSLRKEHKLKVRQPLQNVYIVGSKERKEALAQVGSLIGEELNVKDVHFCSETPEYVTTLIKPNFRTLGKKVGNRLPEIQRALAGLPQEQIQAFMHKGQMVVSLGEETISLDKEDITVSWASAEGFVARSSASFVAVLDCQLTEPLIMEGIARELVNKINTMRRNRKLHVSDRIAIRLHAPVIVQEAFALHKEYICEETLTTSVSVIDYKEGEEWDINGHAVSFVLERVER.

Residues Pro46–His56 carry the 'HIGH' region motif. The 'KMSKS' region motif lies at Lys589–Arg593. Lys592 contacts ATP.

It belongs to the class-I aminoacyl-tRNA synthetase family. IleS type 2 subfamily. As to quaternary structure, monomer. The cofactor is Zn(2+).

The protein resides in the cytoplasm. The enzyme catalyses tRNA(Ile) + L-isoleucine + ATP = L-isoleucyl-tRNA(Ile) + AMP + diphosphate. Functionally, catalyzes the attachment of isoleucine to tRNA(Ile). As IleRS can inadvertently accommodate and process structurally similar amino acids such as valine, to avoid such errors it has two additional distinct tRNA(Ile)-dependent editing activities. One activity is designated as 'pretransfer' editing and involves the hydrolysis of activated Val-AMP. The other activity is designated 'posttransfer' editing and involves deacylation of mischarged Val-tRNA(Ile). In Chlamydia trachomatis serovar D (strain ATCC VR-885 / DSM 19411 / UW-3/Cx), this protein is Isoleucine--tRNA ligase.